The following is a 162-amino-acid chain: Putative 4-hydroxy-4-methyl-2-oxoglutarate aldolase (162 aa).

Residues 75–78 (GDML) and R97 each bind substrate. D98 contributes to the a divalent metal cation binding site.

The protein belongs to the class II aldolase/RraA-like family. Homotrimer. A divalent metal cation serves as cofactor.

The enzyme catalyses 4-hydroxy-4-methyl-2-oxoglutarate = 2 pyruvate. It carries out the reaction oxaloacetate + H(+) = pyruvate + CO2. Its function is as follows. Catalyzes the aldol cleavage of 4-hydroxy-4-methyl-2-oxoglutarate (HMG) into 2 molecules of pyruvate. Also contains a secondary oxaloacetate (OAA) decarboxylase activity due to the common pyruvate enolate transition state formed following C-C bond cleavage in the retro-aldol and decarboxylation reactions. The protein is Putative 4-hydroxy-4-methyl-2-oxoglutarate aldolase of Pseudomonas paraeruginosa (strain DSM 24068 / PA7) (Pseudomonas aeruginosa (strain PA7)).